A 544-amino-acid polypeptide reads, in one-letter code: Probable protein kinase UbiB (544 aa).

The Protein kinase domain maps to 123 to 501; that stretch reads DFDIKPLASA…KRQQAKGQFL (379 aa). Residues 129–137 and Lys-152 contribute to the ATP site; that span reads LASASIAQV. Asp-287 acts as the Proton acceptor in catalysis. Residues 515-537 traverse the membrane as a helical segment; that stretch reads LLTSNITVLASISAATGAAFWLF.

This sequence belongs to the ABC1 family. UbiB subfamily.

It is found in the cell inner membrane. The protein operates within cofactor biosynthesis; ubiquinone biosynthesis [regulation]. Its function is as follows. Is probably a protein kinase regulator of UbiI activity which is involved in aerobic coenzyme Q (ubiquinone) biosynthesis. This chain is Probable protein kinase UbiB, found in Aliivibrio fischeri (strain MJ11) (Vibrio fischeri).